Here is a 60-residue protein sequence, read N- to C-terminus: Large ribosomal subunit protein uL30 (60 aa).

This sequence belongs to the universal ribosomal protein uL30 family. In terms of assembly, part of the 50S ribosomal subunit.

This chain is Large ribosomal subunit protein uL30, found in Amoebophilus asiaticus (strain 5a2).